A 96-amino-acid chain; its full sequence is Large ribosomal subunit protein uL23 (96 aa).

Belongs to the universal ribosomal protein uL23 family. Part of the 50S ribosomal subunit. Contacts protein L29, and trigger factor when it is bound to the ribosome.

Functionally, one of the early assembly proteins it binds 23S rRNA. One of the proteins that surrounds the polypeptide exit tunnel on the outside of the ribosome. Forms the main docking site for trigger factor binding to the ribosome. This chain is Large ribosomal subunit protein uL23, found in Bacillus cytotoxicus (strain DSM 22905 / CIP 110041 / 391-98 / NVH 391-98).